Here is a 452-residue protein sequence, read N- to C-terminus: Transcription factor AP-2-delta (452 aa).

Ser239 carries the post-translational modification Phosphoserine; by PKA. The H-S-H (helix-span-helix), dimerization stretch occupies residues 280-410 (RRKAANVTLL…VLSEMLNYLE (131 aa)). The disordered stretch occupies residues 416-452 (KNGGAADSGQGHANSEKAPLRKTSEAAVKEGKTEKTD). Basic and acidic residues predominate over residues 429 to 452 (NSEKAPLRKTSEAAVKEGKTEKTD).

Belongs to the AP-2 family. In terms of assembly, binds DNA as a dimer. Can form homodimers or heterodimers with other AP-2 family members. As to expression, highly expressed in brain, placenta, skeletal muscle, thymus, small intestine, and prostate, and expressed at lower levels in leukocyte, spleen, testis, ovary and colon. Barely detectable in heart, kidney, liver, lung or pancreas.

It is found in the nucleus. Its function is as follows. Sequence-specific DNA-binding protein that interacts with inducible viral and cellular enhancer elements to regulate transcription of selected genes. AP-2 factors bind to the consensus sequence 5'-GCCNNNGGC-3' and activate genes involved in a large spectrum of important biological functions including proper eye, face, body wall, limb and neural tube development. They also suppress a number of genes including MCAM/MUC18, C/EBP alpha and MYC. The polypeptide is Transcription factor AP-2-delta (Homo sapiens (Human)).